Here is a 188-residue protein sequence, read N- to C-terminus: dCTP deaminase (188 aa).

DCTP-binding positions include 111–116, 135–137, glutamine 156, tyrosine 170, and glutamine 180; these read KSTYAR and TLE. The active-site Proton donor/acceptor is glutamate 137.

The protein belongs to the dCTP deaminase family. As to quaternary structure, homotrimer.

The catalysed reaction is dCTP + H2O + H(+) = dUTP + NH4(+). The protein operates within pyrimidine metabolism; dUMP biosynthesis; dUMP from dCTP (dUTP route): step 1/2. In terms of biological role, catalyzes the deamination of dCTP to dUTP. The polypeptide is dCTP deaminase (Nitrosomonas eutropha (strain DSM 101675 / C91 / Nm57)).